A 347-amino-acid chain; its full sequence is MPAASPQLLPTLPLVTDFATTHSGLRHAAGRFAPSPTSALHLGNLRTALAAWLLARSTGRRFVVRIEDLDRARVAAAGKIASTQLRDLESLGLDWDGPVVRQSERLDLYADAVAGLETYPCFCTRREIAAATTAPNEADWRPYPGTCRRLTVQQRHERLTTRAPATRLASQLNTFEATDLARGCARGRVDDLVLVRNDGTPAYNLAVVVDDGLQGVDQVVRARDLWSSAPRQAQLAELLGFIPPVYAHTGLVTGPGGVRLSKSAGAAGLSDLVDSGIDHRQVVAWLCRSLGLPEVADPHELVNNVALTPPTPVAGIHRLDPRPLGGAMGWWSDAVLDVAVLRETRRP.

L-glutamate-binding positions include 31-35 and Glu-67; that span reads RFAPS. A 'HIGH' region motif is present at residues 34–44; sequence PSPTSALHLGN. Positions 121, 123, 143, and 147 each coordinate Zn(2+). Tyr-203 and Arg-221 together coordinate L-glutamate. A 'KMSKS' region motif is present at residues 259–263; sequence RLSKS. ATP is bound at residue Lys-262.

This sequence belongs to the class-I aminoacyl-tRNA synthetase family. GluQ subfamily. Zn(2+) is required as a cofactor.

In terms of biological role, catalyzes the tRNA-independent activation of glutamate in presence of ATP and the subsequent transfer of glutamate onto a tRNA(Asp). Glutamate is transferred on the 2-amino-5-(4,5-dihydroxy-2-cyclopenten-1-yl) moiety of the queuosine in the wobble position of the QUC anticodon. The protein is Glutamyl-Q tRNA(Asp) synthetase of Cutibacterium acnes (strain DSM 16379 / KPA171202) (Propionibacterium acnes).